Here is a 405-residue protein sequence, read N- to C-terminus: Envelope glycoprotein M (405 aa).

Residues 1-17 (MKSSKNDTFVYRTWVKT) are Intravirion-facing. A helical transmembrane segment spans residues 18 to 38 (LVVYFVMFVMSAVVPITAMFP). Topologically, residues 39-76 (NLGYPCYFNALVDYGALNLTNYNLAHHLTPTLYLEPPE) are virion surface. The chain crosses the membrane as a helical span at residues 77–97 (MFVYITLVFIADCVAFIYYAC). At 98 to 121 (GEVALIKARKKVSGLTDLSAWVSA) the chain is on the intravirion side. The chain crosses the membrane as a helical span at residues 122–142 (VGSPTVLFLAILKLWSIQVFI). Topologically, residues 143-149 (QVLSYKH) are virion surface. A helical transmembrane segment spans residues 150-170 (VFLSAFVYFLHFLASVLHACA). The Intravirion segment spans residues 171–192 (CVTRFSPVWVVKAQDNSIPQDT). A helical membrane pass occupies residues 193–215 (FLWWVVFYLKPVVTNLYLGCLAL). Residues 216-245 (ETLVFSLSVFLALGNSFYFMVGDMVLGAVN) are Virion surface-facing. The helical transmembrane segment at 246–266 (LFLILPIFWYILTEVWLASFM) threads the bilayer. R267 is a topological domain (intravirion). The helical transmembrane segment at 268 to 288 (HNFGFYCGMFIASIILILPLV) threads the bilayer. Over 289-299 (RYEAVFVSAKL) the chain is Virion surface. Residues 300-320 (HTTVAINVAIIPILCSVAMLI) form a helical membrane-spanning segment. The Intravirion portion of the chain corresponds to 321-405 (RICRIFKSMR…TTDSEEEIFP (85 aa)). The disordered stretch occupies residues 346–405 (LESEPRPRPSRTPSPGRNRRRSSTSSSSSRSTRRQRPVSTQALVSSVLPMTTDSEEEIFP). The segment covering 386–397 (QALVSSVLPMTT) has biased composition (polar residues).

It belongs to the herpesviridae glycoprotein M family. In terms of assembly, interacts (via N-terminus) with gN (via N-terminus). The gM-gN heterodimer forms the gCII complex.

The protein localises to the virion membrane. It is found in the host Golgi apparatus. Its subcellular location is the host trans-Golgi network. The protein resides in the host endosome membrane. It localises to the host nucleus inner membrane. Its function is as follows. Envelope glycoprotein important for virion assembly and egress. Plays a role in the correct incorporation of gH-gL into virion membrane. Directs the glycoprotein N (gN) to the host trans-Golgi network. This Epstein-Barr virus (strain GD1) (HHV-4) protein is Envelope glycoprotein M.